Here is a 492-residue protein sequence, read N- to C-terminus: GMP reductase (492 aa).

NADP(+) contacts are provided by residues serine 30–arginine 31 and arginine 78. CBS domains follow at residues leucine 99–threonine 162 and methionine 164–threonine 223. NADP(+) is bound by residues aspartate 260–alanine 262 and valine 313–glycine 314. The K(+) site is built by glycine 314, glycine 316, and cysteine 319. The Thioimidate intermediate role is filled by cysteine 319. Threonine 321 (proton donor/acceptor) is an active-site residue. Position 322 (arginine 322) interacts with K(+). GMP is bound by residues aspartate 352–glycine 354, glycine 375–asparagine 376, and glycine 401–alanine 403. Residues methionine 402 and serine 454–serine 457 each bind NADP(+). The short motif at serine 490–leucine 492 is the Microbody targeting signal element.

The protein belongs to the IMPDH/GMPR family. GuaC type 1 subfamily. In terms of assembly, homotetramer.

The protein localises to the glycosome. It carries out the reaction IMP + NH4(+) + NADP(+) = GMP + NADPH + 2 H(+). Activated by GTP and inhibited by ATP and IMP. Mycophenolic acid (MPA) is a competitive inhibitor of the enzyme with respect to NADPH. In terms of biological role, catalyzes the irreversible NADPH-dependent deamination of GMP to IMP. It functions in the conversion of nucleobase, nucleoside and nucleotide derivatives of G to A nucleotides, and in maintaining the intracellular balance of A and G nucleotides. The sequence is that of GMP reductase from Leishmania major.